The following is a 628-amino-acid chain: 1,4-alpha-glucan branching enzyme GlgB (628 aa).

Residue Asp-304 is the Nucleophile of the active site. Glu-355 acts as the Proton donor in catalysis.

This sequence belongs to the glycosyl hydrolase 13 family. GlgB subfamily. Monomer.

The catalysed reaction is Transfers a segment of a (1-&gt;4)-alpha-D-glucan chain to a primary hydroxy group in a similar glucan chain.. It functions in the pathway glycan biosynthesis; glycogen biosynthesis. Functionally, catalyzes the formation of the alpha-1,6-glucosidic linkages in glycogen by scission of a 1,4-alpha-linked oligosaccharide from growing alpha-1,4-glucan chains and the subsequent attachment of the oligosaccharide to the alpha-1,6 position. This is 1,4-alpha-glucan branching enzyme GlgB from Streptococcus mutans serotype c (strain ATCC 700610 / UA159).